The primary structure comprises 208 residues: UPF0323 lipoprotein HH_0014 (208 aa).

The signal sequence occupies residues 1 to 26 (MKHIHKIKNYAMVGGLGVMAVFALNA). A lipid anchor (N-palmitoyl cysteine) is attached at cysteine 27. Cysteine 27 is lipidated: S-diacylglycerol cysteine. Residues 148–208 (ANSQRNYKSP…TNRNTGSMGS (61 aa)) are disordered. Low complexity-rich tracts occupy residues 169-185 (SAKTGASGASKTSSGKS) and 193-208 (SSQSTSTNRNTGSMGS).

It belongs to the UPF0323 family.

Its subcellular location is the cell membrane. This is UPF0323 lipoprotein HH_0014 from Helicobacter hepaticus (strain ATCC 51449 / 3B1).